Consider the following 386-residue polypeptide: MSSRGVTAPQGFVAAGATAGIKPSGNKDMALVVNQGPEFVGAAVFTRNRVVASPVKYTKKAVANGTLRAVLYNSGNANACNGVQGDKDVHEIVDYLASKLKVDPLDIAACSTGLIGEPLPVTMIKAGVDKLIPALGDNGGEAADSIMTTDTVAKETVVKCNGWTLGGMGKGVGMMAPSLATMLVCLTTDACVTQAQAHAALSKACDVTFNTLDIDGSTSTNDTVILLANGASGITPTESEFNDAVLQACADIADQLQADAEGVTKRVRITVTGTTTDSQALNAARTLGRDNLFKCAMFGSDPNWGRVLAAVGMADADMDPDNISVYFNDQPVCLQSGGTPEARQVDLSGIDIDVRVDLGTGGPGKAFVRTTDLSHQYVEINSAYSS.

The substrate site is built by Thr-148, Lys-170, Thr-181, Glu-261, Asn-381, and Ser-386. Thr-181 serves as the catalytic Nucleophile.

It belongs to the ArgJ family. As to quaternary structure, heterotetramer of two alpha and two beta chains.

It localises to the cytoplasm. It catalyses the reaction N(2)-acetyl-L-ornithine + L-glutamate = N-acetyl-L-glutamate + L-ornithine. The enzyme catalyses L-glutamate + acetyl-CoA = N-acetyl-L-glutamate + CoA + H(+). It functions in the pathway amino-acid biosynthesis; L-arginine biosynthesis; L-ornithine and N-acetyl-L-glutamate from L-glutamate and N(2)-acetyl-L-ornithine (cyclic): step 1/1. The protein operates within amino-acid biosynthesis; L-arginine biosynthesis; N(2)-acetyl-L-ornithine from L-glutamate: step 1/4. In terms of biological role, catalyzes two activities which are involved in the cyclic version of arginine biosynthesis: the synthesis of N-acetylglutamate from glutamate and acetyl-CoA as the acetyl donor, and of ornithine by transacetylation between N(2)-acetylornithine and glutamate. In Corynebacterium diphtheriae (strain ATCC 700971 / NCTC 13129 / Biotype gravis), this protein is Arginine biosynthesis bifunctional protein ArgJ.